Consider the following 449-residue polypeptide: Capsid protein (449 aa).

The tract at residues 1-43 (MARRARRPRGRFYAFRRGRWHHLKRLRRRYKFRHRRRQRYRRR) is DNA-binding. The tract at residues 6–47 (RRPRGRFYAFRRGRWHHLKRLRRRYKFRHRRRQRYRRRAFRK) is nuclear localization signals.

It belongs to the gyrovirus capsid protein family. As to quaternary structure, homomultimer (Potential). Interacts with Rep; this interaction relocates Rep into the nucleus.

The protein resides in the host nucleus. It is found in the virion. Self-assembles to form the virion icosahedral capsid with a T=1 symmetry. This very small capsid (25 nm in diameter) allows the virus to be very stable in the environment and resistant to some disinfectants, including detergents. Essential for the initial attachment to host receptors. After attachment, the virus is endocytosed and traffics to the nucleus. The capsid protein binds and transports the viral genome and Rep across the nuclear envelope. The polypeptide is Capsid protein (VP1) (Gallus gallus (Chicken)).